A 152-amino-acid chain; its full sequence is Deoxyuridine 5'-triphosphate nucleotidohydrolase (152 aa).

Substrate-binding positions include Arg-65 to Gly-67, Asn-78, and Thr-82 to Asp-84.

Belongs to the dUTPase family. It depends on Mg(2+) as a cofactor.

The catalysed reaction is dUTP + H2O = dUMP + diphosphate + H(+). It functions in the pathway pyrimidine metabolism; dUMP biosynthesis; dUMP from dCTP (dUTP route): step 2/2. In terms of biological role, this enzyme is involved in nucleotide metabolism: it produces dUMP, the immediate precursor of thymidine nucleotides and it decreases the intracellular concentration of dUTP so that uracil cannot be incorporated into DNA. The polypeptide is Deoxyuridine 5'-triphosphate nucleotidohydrolase (Chlorobaculum tepidum (strain ATCC 49652 / DSM 12025 / NBRC 103806 / TLS) (Chlorobium tepidum)).